The primary structure comprises 62 residues: LKKSLFLVLFLGLVSLSICEEEKRETEEKENEQEDDKSEEKRLLSLVPHAINAVSAIAKHFG.

The first 19 residues, Leu-1–Cys-19, serve as a signal peptide directing secretion. The propeptide occupies Glu-20–Glu-40. Phe-61 bears the Phenylalanine amide mark.

The protein belongs to the frog skin active peptide (FSAP) family. Phylloseptin subfamily. Expressed by the skin glands.

The protein localises to the secreted. In terms of biological role, has antimicrobial activity. The protein is Phylloseptin-Az7 (psn15) of Pithecopus azureus (Orange-legged monkey tree frog).